We begin with the raw amino-acid sequence, 305 residues long: Sulfate adenylyltransferase subunit 2 (305 aa).

This sequence belongs to the PAPS reductase family. CysD subfamily. In terms of assembly, heterodimer composed of CysD, the smaller subunit, and CysN.

It carries out the reaction sulfate + ATP + H(+) = adenosine 5'-phosphosulfate + diphosphate. The protein operates within sulfur metabolism; hydrogen sulfide biosynthesis; sulfite from sulfate: step 1/3. With CysN forms the ATP sulfurylase (ATPS) that catalyzes the adenylation of sulfate producing adenosine 5'-phosphosulfate (APS) and diphosphate, the first enzymatic step in sulfur assimilation pathway. APS synthesis involves the formation of a high-energy phosphoric-sulfuric acid anhydride bond driven by GTP hydrolysis by CysN coupled to ATP hydrolysis by CysD. The sequence is that of Sulfate adenylyltransferase subunit 2 from Pseudomonas fluorescens (strain SBW25).